A 93-amino-acid chain; its full sequence is HssA/B-like protein 23 (93 aa).

It belongs to the hssA/B family.

The chain is HssA/B-like protein 23 (hssl23) from Dictyostelium discoideum (Social amoeba).